Here is a 221-residue protein sequence, read N- to C-terminus: Transcription factor bHLH148 (221 aa).

Disordered stretches follow at residues 1 to 45 and 70 to 89; these read MASL…GEIH and LNSS…GKAV. Low complexity-rich tracts occupy residues 26-41 and 72-82; these read SASS…SSVS and SSASTSSSPTA. Residues 148-197 enclose the bHLH domain; it reads KRRVSVLRLNKKSIPDVNRKVRVLGRLVPGCGKQSVPVILEEATDYIQAL.

In terms of assembly, homodimer. Interacts with PRE3. Binds to RSA1.

It is found in the nucleus. BHLH transcription factor that binds DNA on specific sequence 5'-CANNTG-3' in target gene promoters. Negatively regulates brassinosteroid signaling. Together with BHLH148/RITF1, regulates the transcription of several genes involved in the detoxification of reactive oxygen species (ROS) generated by salt (NaCl) stress. Confers tolerance to salt and to the oxidative stress-inducing reagents hydrogen peroxide H(2)O(2) and methyl viologen (MV). The chain is Transcription factor bHLH148 from Arabidopsis thaliana (Mouse-ear cress).